A 303-amino-acid chain; its full sequence is 2-dehydropantoate 2-reductase (303 aa).

NADP(+) contacts are provided by residues 7 to 12 (GCGALG), N98, and A122. N98 contacts substrate. The active-site Proton donor is the K176. Substrate-binding residues include N180, N184, N194, and S244. E256 is an NADP(+) binding site.

Belongs to the ketopantoate reductase family.

It localises to the cytoplasm. It carries out the reaction (R)-pantoate + NADP(+) = 2-dehydropantoate + NADPH + H(+). The protein operates within cofactor biosynthesis; (R)-pantothenate biosynthesis; (R)-pantoate from 3-methyl-2-oxobutanoate: step 2/2. Catalyzes the NADPH-dependent reduction of ketopantoate into pantoic acid. This is 2-dehydropantoate 2-reductase (panE) from Yersinia pestis.